Here is a 276-residue protein sequence, read N- to C-terminus: SRR1-like protein (276 aa).

Ser-30 carries the phosphoserine modification. The residue at position 34 (Tyr-34) is a Phosphotyrosine.

This sequence belongs to the SRR1 family.

Possible regulator involved in a circadian clock input pathway. This Drosophila melanogaster (Fruit fly) protein is SRR1-like protein.